The primary structure comprises 584 residues: Beta-fructofuranosidase, insoluble isoenzyme CWINV1 (584 aa).

A signal peptide spans 1–28 (MTKEVCSNIGLWLLLTLLIGNYVVNLEA). Substrate contacts are provided by residues 63 to 66 (WMND), Q82, W90, and 125 to 126 (WS). D66 is a catalytic residue. N159 and N186 each carry an N-linked (GlcNAc...) asparagine glycan. Residues 191–192 (RD), E246, and D282 each bind substrate. 2 N-linked (GlcNAc...) asparagine glycosylation sites follow: N342 and N446. C442 and C491 are disulfide-bonded.

The protein belongs to the glycosyl hydrolase 32 family. As to expression, expressed in seedlings, leaves, flowers, and seeds.

The protein resides in the secreted. It is found in the extracellular space. The protein localises to the apoplast. Its subcellular location is the cell wall. It catalyses the reaction Hydrolysis of terminal non-reducing beta-D-fructofuranoside residues in beta-D-fructofuranosides.. In terms of biological role, beta-fructofuranosidase that can use sucrose and 1-kestose, and, to a lower extent, neokestose and levan, as substrates, but not inuline. The sequence is that of Beta-fructofuranosidase, insoluble isoenzyme CWINV1 (CWINV1) from Arabidopsis thaliana (Mouse-ear cress).